A 261-amino-acid chain; its full sequence is Chanoclavine-I dehydrogenase ifgE (261 aa).

An N-terminal signal peptide occupies residues 1 to 20; that stretch reads MASVKSRVFAITGGASGIGA. Positions 18, 48, 66, 132, 166, 170, and 201 each coordinate NADP(+). Tyrosine 166 (proton acceptor) is an active-site residue. The active-site Lowers pKa of active site Tyr is the lysine 170.

The protein belongs to the short-chain dehydrogenases/reductases (SDR) family.

It participates in alkaloid biosynthesis; ergot alkaloid biosynthesis. Chanoclavine-I dehydrogenase; part of the gene cluster that mediates the biosynthesis of isofumigaclavines, fungal ergot alkaloids. The tryptophan dimethylallyltransferase ifgA catalyzes the first step of ergot alkaloid biosynthesis by condensing dimethylallyl diphosphate (DMAP) and tryptophan to form 4-dimethylallyl-L-tryptophan. The second step is catalyzed by the methyltransferase ifgB that methylates 4-dimethylallyl-L-tryptophan in the presence of S-adenosyl-L-methionine, resulting in the formation of N-methyl-dimethylallyl-L-tryptophan. The catalase ifgD and the FAD-dependent oxidoreductase ifgC then transform N-methyl-dimethylallyl-L-tryptophan to chanoclavine-I which is further oxidized by ifgE in the presence of NAD(+), resulting in the formation of chanoclavine-I aldehyde. The chanoclavine-I aldehyde reductases ifgG and/or fgaOx3 reduce chanoclavine-I aldehyde to dihydrochanoclavine-I aldehyde that spontaneously dehydrates to form 6,8-dimethyl-6,7-didehydroergoline. The festuclavine dehydrogenases ifgF1 and/or ifgF2 then catalyze the reduction of 6,8-dimethyl-6,7-didehydroergoline to form festuclavine. Hydrolysis of festuclavine by a yet undetermined cytochrome P450 monooxygenase (called ifgH) then leads to the formation of isofumigaclavine B which is in turn acetylated by ifgI to isofumigaclavine A. Penicillium roqueforti has interestingly at least two sets of genes for the consumption of chanoclavine-I aldehyde on three different loci, the OYEs ifgG/fgaOx3 and the festuclavine synthase homologs ifgF1/ifgF2. The reason for the duplication of these genes is unclear, probably to ensure the conversion of chanoclavine-I aldehyde by differential gene expression under various environmental conditions. This Penicillium roqueforti (strain FM164) protein is Chanoclavine-I dehydrogenase ifgE.